A 600-amino-acid polypeptide reads, in one-letter code: NADH-quinone oxidoreductase subunit C/D (600 aa).

An NADH dehydrogenase I subunit C region spans residues 1–190; the sequence is MVNNMTDLTA…SPFELTKAKQ (190 aa). Positions 214-600 are NADH dehydrogenase I subunit D; sequence DFMFLNLGPN…IDFVMSDVDR (387 aa).

In the N-terminal section; belongs to the complex I 30 kDa subunit family. The protein in the C-terminal section; belongs to the complex I 49 kDa subunit family. As to quaternary structure, NDH-1 is composed of 13 different subunits. Subunits NuoB, CD, E, F, and G constitute the peripheral sector of the complex.

The protein resides in the cell inner membrane. It catalyses the reaction a quinone + NADH + 5 H(+)(in) = a quinol + NAD(+) + 4 H(+)(out). NDH-1 shuttles electrons from NADH, via FMN and iron-sulfur (Fe-S) centers, to quinones in the respiratory chain. The immediate electron acceptor for the enzyme in this species is believed to be ubiquinone. Couples the redox reaction to proton translocation (for every two electrons transferred, four hydrogen ions are translocated across the cytoplasmic membrane), and thus conserves the redox energy in a proton gradient. This Escherichia coli (strain K12 / DH10B) protein is NADH-quinone oxidoreductase subunit C/D.